The chain runs to 126 residues: Fluoride-specific ion channel FluC (126 aa).

A run of 4 helical transmembrane segments spans residues 6–26 (VLLV…VALA), 32–52 (TGFP…IGFI), 68–90 (LLLT…ETGG), and 102–122 (LYVA…TLLA). Residues Gly76 and Thr79 each coordinate Na(+).

This sequence belongs to the fluoride channel Fluc/FEX (TC 1.A.43) family.

The protein localises to the cell inner membrane. The catalysed reaction is fluoride(in) = fluoride(out). Its activity is regulated as follows. Na(+) is not transported, but it plays an essential structural role and its presence is essential for fluoride channel function. Fluoride-specific ion channel. Important for reducing fluoride concentration in the cell, thus reducing its toxicity. The chain is Fluoride-specific ion channel FluC from Chlorobaculum tepidum (strain ATCC 49652 / DSM 12025 / NBRC 103806 / TLS) (Chlorobium tepidum).